We begin with the raw amino-acid sequence, 98 residues long: Exopolysaccharide production repressor protein (98 aa).

2 helical membrane-spanning segments follow: residues 6–26 (VFLSMIGALAAFAVATYYLNG) and 35–55 (TLICAVLIQVGYFIAVLFLVW). A disordered region spans residues 73–98 (AEAANDEKQPGKVSLRRLNRPHHLNS). Residues 86–98 (SLRRLNRPHHLNS) show a composition bias toward basic residues.

Its subcellular location is the cell membrane. It functions in the pathway glycan metabolism; exopolysaccharide biosynthesis. Inhibition of exopolysaccharide synthesis (EPS) and nodulation ability (NOD). The chain is Exopolysaccharide production repressor protein (exoX) from Rhizobium meliloti (strain 1021) (Ensifer meliloti).